The primary structure comprises 570 residues: Proline--tRNA ligase (570 aa).

The protein belongs to the class-II aminoacyl-tRNA synthetase family. ProS type 1 subfamily. As to quaternary structure, homodimer.

It localises to the cytoplasm. It carries out the reaction tRNA(Pro) + L-proline + ATP = L-prolyl-tRNA(Pro) + AMP + diphosphate. In terms of biological role, catalyzes the attachment of proline to tRNA(Pro) in a two-step reaction: proline is first activated by ATP to form Pro-AMP and then transferred to the acceptor end of tRNA(Pro). As ProRS can inadvertently accommodate and process non-cognate amino acids such as alanine and cysteine, to avoid such errors it has two additional distinct editing activities against alanine. One activity is designated as 'pretransfer' editing and involves the tRNA(Pro)-independent hydrolysis of activated Ala-AMP. The other activity is designated 'posttransfer' editing and involves deacylation of mischarged Ala-tRNA(Pro). The misacylated Cys-tRNA(Pro) is not edited by ProRS. In Thermoanaerobacter sp. (strain X514), this protein is Proline--tRNA ligase.